Reading from the N-terminus, the 122-residue chain is Small ribosomal subunit protein uS13 (122 aa).

A disordered region spans residues valine 98–lysine 122.

This sequence belongs to the universal ribosomal protein uS13 family. In terms of assembly, part of the 30S ribosomal subunit. Forms a loose heterodimer with protein S19. Forms two bridges to the 50S subunit in the 70S ribosome.

In terms of biological role, located at the top of the head of the 30S subunit, it contacts several helices of the 16S rRNA. In the 70S ribosome it contacts the 23S rRNA (bridge B1a) and protein L5 of the 50S subunit (bridge B1b), connecting the 2 subunits; these bridges are implicated in subunit movement. Contacts the tRNAs in the A and P-sites. The sequence is that of Small ribosomal subunit protein uS13 from Roseobacter denitrificans (strain ATCC 33942 / OCh 114) (Erythrobacter sp. (strain OCh 114)).